Reading from the N-terminus, the 326-residue chain is tRNA-modifying protein YgfZ (326 aa).

W27 and W189 together coordinate folate.

This sequence belongs to the tRNA-modifying YgfZ family.

Its subcellular location is the cytoplasm. In terms of biological role, folate-binding protein involved in regulating the level of ATP-DnaA and in the modification of some tRNAs. It is probably a key factor in regulatory networks that act via tRNA modification, such as initiation of chromosomal replication. This is tRNA-modifying protein YgfZ from Salmonella paratyphi A (strain AKU_12601).